The sequence spans 159 residues: Testis-specific XK-related protein, Y-linked (159 aa).

3 consecutive transmembrane segments (helical) span residues 1-21 (MFIF…VGAI), 45-65 (IYLM…LAFF), and 72-92 (GSLH…WLEF).

This sequence belongs to the XK family. In terms of tissue distribution, testis specific.

The protein localises to the membrane. The sequence is that of Testis-specific XK-related protein, Y-linked (XKRY) from Homo sapiens (Human).